The primary structure comprises 458 residues: MNSAISDTLTFECETGNYHTFCPISCVAWLYQKIEDSFFLVVGTKTCGYFLQNALGVMIFAEPRYAMAELEEGDISAQLNDYQELKNICLQIKKDRNPSVIVWIGTCTTEIIKMDLEGMAPRLEAEIGIPIVVARANGLDYAFTQGEDTVLAAMAQRCPEISVASKQNQPMGSAFSQTLKVSNQQDHPPLVLFGSLPSTVASQLDLELKRQSIEVSGWLPSQRYTDLPLLGEGVHVCGVNPFLSRTATTLMRRRKCKLISAPFPIGPDGTRAWIEKICSVFGIQPQGLEERENQIWDGLKDYIDLVRGKSVFFMGDNLLEVSLARFLIRCGMVVYEIGIPYMDKRYQAAELALLQKTCQDMNVPMPRIVEKPDNYNQVQRMRELQPDLAITGMAHANPLEARGISTKWSVEFTFAQIHGFTNARDILELVTRPLRRNHSLQGLGWSSLVKEQNQLIPS.

Cys-22, Cys-47, and Cys-107 together coordinate [4Fe-4S] cluster.

This sequence belongs to the BchN/ChlN family. Protochlorophyllide reductase is composed of three subunits; ChlL, ChlN and ChlB. Forms a heterotetramer of two ChlB and two ChlN subunits. It depends on [4Fe-4S] cluster as a cofactor.

Its subcellular location is the plastid. The protein resides in the chloroplast. It carries out the reaction chlorophyllide a + oxidized 2[4Fe-4S]-[ferredoxin] + 2 ADP + 2 phosphate = protochlorophyllide a + reduced 2[4Fe-4S]-[ferredoxin] + 2 ATP + 2 H2O. Its pathway is porphyrin-containing compound metabolism; chlorophyll biosynthesis (light-independent). Its function is as follows. Component of the dark-operative protochlorophyllide reductase (DPOR) that uses Mg-ATP and reduced ferredoxin to reduce ring D of protochlorophyllide (Pchlide) to form chlorophyllide a (Chlide). This reaction is light-independent. The NB-protein (ChlN-ChlB) is the catalytic component of the complex. In Chaetosphaeridium globosum (Charophycean green alga), this protein is Light-independent protochlorophyllide reductase subunit N.